Reading from the N-terminus, the 185-residue chain is Ribosome-recycling factor (185 aa).

The tract at residues 137–158 (NQVKKLEKDKEISEDESKKAQE) is disordered. The span at 140 to 158 (KKLEKDKEISEDESKKAQE) shows a compositional bias: basic and acidic residues.

It belongs to the RRF family.

The protein resides in the cytoplasm. Responsible for the release of ribosomes from messenger RNA at the termination of protein biosynthesis. May increase the efficiency of translation by recycling ribosomes from one round of translation to another. The polypeptide is Ribosome-recycling factor (Helicobacter pylori (strain P12)).